We begin with the raw amino-acid sequence, 325 residues long: Reticulocalbin-1 (325 aa).

The N-terminal stretch at 1–23 is a signal peptide; sequence MARGGRLGLALGLLLALVLALRA. N-linked (GlcNAc...) asparagine; partial glycosylation occurs at N47. A phosphoserine mark is found at S49 and S74. EF-hand domains are found at residues 73–108, 109–144, 160–195, 197–232, 238–273, and 274–309; these read ESKERLGKIVDRIDSDGDGLVTTEELKLWIKRVQKR, YIYDNVAKVWKDYDRDKDEKISWEEYKQATYGYYLG, KMLPRDERRFKASDLDGDLTATREEFTAFLHPEEFE, MKEIVVLETLEDIDKNGDGFVDQDEYIADMFSHEDN, WVLSEREQFNDFRDLNKDGKLDKDEIRHWILPQDYD, and HAQAEARHLVYESDKNKDEMLTKEEILDNWNMFVGS. Ca(2+) is bound by residues D86, D88, D90, E97, D122, D124, D126, K128, E133, D173, D175, D177, T179, E184, D210, N212, D214, E221, D251, N253, D255, K257, E262, D287, N289, D291, M293, and E298. The Prevents secretion from ER motif lies at 322-325; sequence HDEL.

This sequence belongs to the CREC family. Post-translationally, O-glycosylated. O-mannosylated by POMT1 and POMT2 and elongated by POMGNT1.

The protein localises to the endoplasmic reticulum lumen. May regulate calcium-dependent activities in the endoplasmic reticulum lumen or post-ER compartment. The sequence is that of Reticulocalbin-1 (Rcn1) from Mus musculus (Mouse).